Consider the following 717-residue polypeptide: IVVEMDPIKTSFEKWAKPGHFSXTLXKGPNTTTWIWNLHADAHDFGSHTNDLEEISRKVFRAHFGQLAIILIWLSGMYFHGARFSNYEAWLSDPTHIKPSAQVVWPIVGQEILNGDVGGGSRGIQITSGLFQIWRASGITSELQLYCTAIGALIFAALMLFAGWFHYHKAAPKLAWFQDVESMLNHHLAGLLGLGSLSWAGHQVHVSLPINQLLDAGVDPKEIPLPHEFISNRDLLAQLYPSFAEGLTPLFTLNWSEYSEFLTFRGGLNPVTGGLWLTDTAHHHLAIAILFLIAGHMYRTNWGIGHSLKEILETHKGPFTGEGHKGLYEILTTSWHAQLALNLAMLGSLTIVVAHHMYSMPPYPYLAIDYGTQLSLFTHHMWIGGFLIVGAAAHAAIFMVRDYDPTTQYNNLLDRVLRHRDAIVSHLNWACIFLGFHSFGLYIHNDTMSALGRPQDMFSDTAIQLQPIFAQWVQNTHALAPGSTAPDATASTSLTWGGGDLVAVGGKVALLPIPLGTADFLVHHIHAFTIHVTVLILLKGVLFARSSRLIPDKANLGFRFPCDGPGRGGTCQVSAWDHVFLGLFWMYNAISVVIFHFSWKMQSDVWGSISDQGMVTHITGGNFAQSSITINGWLRDFLWAQASQVIQSYGSSLSAYGLLFLGAHXVWAFSLMFLFSGRGYWQELIESIVWAHNKLEVAPVIQPRALSIVQGRAVGVA.

Transmembrane regions (helical) follow at residues 59 to 82 (VFRAHFGQLAIILIWLSGMYFHGA), 145 to 168 (LYCTAIGALIFAALMLFAGWFHYH), 184 to 208 (LNHHLAGLLGLGSLSWAGHQVHVSL), 280 to 298 (TAHHHLAIAILFLIAGHMY), 335 to 358 (WHAQLALNLAMLGSLTIVVAHHMY), 374 to 400 (LSLFTHHMWIGGFLIVGAAAHAAIFMV), 422 to 444 (AIVSHLNWACIFLGFHSFGLYIH), and 520 to 538 (FLVHHIHAFTIHVTVLILL). [4Fe-4S] cluster is bound by residues C562 and C571. 2 consecutive transmembrane segments (helical) span residues 578–599 (HVFLGLFWMYNAISVVIFHFSW) and 653–675 (LSAYGLLFLGAHXVWAFSLMFLF). A chlorophyll a'-binding site is contributed by H664. Chlorophyll a is bound by residues M672 and Y680. Position 681 (W681) interacts with phylloquinone. Residues 713–717 (AVGVA) form a helical membrane-spanning segment.

It belongs to the PsaA/PsaB family. The PsaA/B heterodimer binds the P700 chlorophyll special pair and subsequent electron acceptors. PSI consists of a core antenna complex that captures photons, and an electron transfer chain that converts photonic excitation into a charge separation. The eukaryotic PSI reaction center is composed of at least 11 subunits. P700 is a chlorophyll a/chlorophyll a' dimer, A0 is one or more chlorophyll a, A1 is one or both phylloquinones and FX is a shared 4Fe-4S iron-sulfur center. serves as cofactor.

It localises to the plastid. Its subcellular location is the chloroplast thylakoid membrane. The enzyme catalyses reduced [plastocyanin] + hnu + oxidized [2Fe-2S]-[ferredoxin] = oxidized [plastocyanin] + reduced [2Fe-2S]-[ferredoxin]. In terms of biological role, psaA and PsaB bind P700, the primary electron donor of photosystem I (PSI), as well as the electron acceptors A0, A1 and FX. PSI is a plastocyanin-ferredoxin oxidoreductase, converting photonic excitation into a charge separation, which transfers an electron from the donor P700 chlorophyll pair to the spectroscopically characterized acceptors A0, A1, FX, FA and FB in turn. Oxidized P700 is reduced on the lumenal side of the thylakoid membrane by plastocyanin. In Cycas revoluta (Sago palm), this protein is Photosystem I P700 chlorophyll a apoprotein A1.